The sequence spans 1409 residues: DNA-directed RNA polymerase subunit beta' (1409 aa).

Cys70, Cys72, Cys85, and Cys88 together coordinate Zn(2+). Residues Asp460, Asp462, and Asp464 each contribute to the Mg(2+) site. Zn(2+)-binding residues include Cys814, Cys888, Cys895, and Cys898.

This sequence belongs to the RNA polymerase beta' chain family. The RNAP catalytic core consists of 2 alpha, 1 beta, 1 beta' and 1 omega subunit. When a sigma factor is associated with the core the holoenzyme is formed, which can initiate transcription. Requires Mg(2+) as cofactor. It depends on Zn(2+) as a cofactor.

The catalysed reaction is RNA(n) + a ribonucleoside 5'-triphosphate = RNA(n+1) + diphosphate. Functionally, DNA-dependent RNA polymerase catalyzes the transcription of DNA into RNA using the four ribonucleoside triphosphates as substrates. This Shewanella violacea protein is DNA-directed RNA polymerase subunit beta'.